Here is a 185-residue protein sequence, read N- to C-terminus: Elongation factor P (185 aa).

It belongs to the elongation factor P family.

The protein resides in the cytoplasm. It participates in protein biosynthesis; polypeptide chain elongation. Involved in peptide bond synthesis. Stimulates efficient translation and peptide-bond synthesis on native or reconstituted 70S ribosomes in vitro. Probably functions indirectly by altering the affinity of the ribosome for aminoacyl-tRNA, thus increasing their reactivity as acceptors for peptidyl transferase. The polypeptide is Elongation factor P (Microcystis aeruginosa (strain NIES-843 / IAM M-2473)).